The sequence spans 570 residues: Guanine nucleotide-binding protein alpha-3 subunit (570 aa).

The PH domain occupies 10–113 (RETLRAYLSK…WIEAIKHAIE (104 aa)). The region spanning 144 to 570 (PVLKLLLLGT…IISKTLEFYC (427 aa)) is the G-alpha domain. The interval 147–160 (KLLLLGTGESGKST) is G1 motif. Residue 152–159 (GTGESGKS) coordinates GTP. Residue Ser159 coordinates Mg(2+). 2 stretches are compositionally biased toward low complexity: residues 254-272 (NNNS…SSSS) and 290-316 (NSNS…RSNS). The segment at 254–321 (NNNSNSSSLK…NRSNSDGSSN (68 aa)) is disordered. The G2 motif stretch occupies residues 386–394 (DILKSRATT). GTP is bound by residues 388–394 (LKSRATT), 414–418 (DVAGQ), 483–486 (NKID), and Ala544. Thr394 serves as a coordination point for Mg(2+). Positions 410–419 (FRIVDVAGQR) are G3 motif. Residues 479 to 486 (ILFLNKID) are G4 motif. The segment at 542 to 547 (TCATDT) is G5 motif.

This sequence belongs to the G-alpha family. As to quaternary structure, g proteins are composed of 3 units; alpha, beta and gamma. The alpha chain contains the guanine nucleotide binding site.

Guanine nucleotide-binding proteins (G proteins) are involved as modulators or transducers in various transmembrane signaling systems. G alpha-3 plays a role in development. G alpha-3 mutants fail to aggregate. This chain is Guanine nucleotide-binding protein alpha-3 subunit (gpaC), found in Dictyostelium discoideum (Social amoeba).